Consider the following 900-residue polypeptide: Protein translocase subunit SecA (900 aa).

Residues Gln-87, 105 to 109 (GEGKT), and Asp-510 contribute to the ATP site. The interval 857-890 (DSLDSLSDGGSDSADGQEYPKVGRNEPCPCGSGK) is disordered. Low complexity predominate over residues 860–872 (DSLSDGGSDSADG). The Zn(2+) site is built by Cys-884, Cys-886, Cys-895, and His-896.

Belongs to the SecA family. As to quaternary structure, monomer and homodimer. Part of the essential Sec protein translocation apparatus which comprises SecA, SecYEG and auxiliary proteins SecDF-YajC and YidC. Requires Zn(2+) as cofactor.

The protein resides in the cell inner membrane. It localises to the cytoplasm. The catalysed reaction is ATP + H2O + cellular proteinSide 1 = ADP + phosphate + cellular proteinSide 2.. Its function is as follows. Part of the Sec protein translocase complex. Interacts with the SecYEG preprotein conducting channel. Has a central role in coupling the hydrolysis of ATP to the transfer of proteins into and across the cell membrane, serving both as a receptor for the preprotein-SecB complex and as an ATP-driven molecular motor driving the stepwise translocation of polypeptide chains across the membrane. The polypeptide is Protein translocase subunit SecA (Marinomonas sp. (strain MWYL1)).